We begin with the raw amino-acid sequence, 352 residues long: Gamma-aminobutyric acid-binding protein (352 aa).

Positions 1 to 28 are cleaved as a signal peptide; sequence MFKSLHQYAHVFSRLSLFGLAFAAAAQA.

The protein belongs to the bacterial solute-binding protein 1 family.

The protein resides in the periplasm. Its function is as follows. Binds specifically gamma-aminobutyric acid (GABA) with nanomolar affinity. Does not bind structurally related compounds such as 4-aminovaleric acid, spermidine, histamine and butyric acid. In Pseudomonas aeruginosa (strain ATCC 15692 / DSM 22644 / CIP 104116 / JCM 14847 / LMG 12228 / 1C / PRS 101 / PAO1), this protein is Gamma-aminobutyric acid-binding protein.